The chain runs to 611 residues: Nuclear cap-binding protein subunit 3 (611 aa).

Positions 1–44 (MAAVRGLRVSVKAGGGAEPEPMEVEEGEVEAAADRASPREVVSG) are disordered. Residues 20-31 (EPMEVEEGEVEA) are compositionally biased toward acidic residues. Positions 108-169 (ETLYVYGVDD…LSSMPTNEKG (62 aa)) are RNA recognition motif (RRM) domain. Residues 137–140 (WLDD) carry the WLDD motif; essential for 7-methylguanosine-containing mRNA cap binding motif. 5 disordered regions span residues 159–230 (NLSS…PDTL), 338–360 (EEPI…DDRV), 373–393 (RERE…EMDY), 423–568 (KTIR…DSVL), and 583–611 (RQKK…DTDS). Basic and acidic residues predominate over residues 168 to 179 (KGQRKKDGEHSS). Composition is skewed to acidic residues over residues 196-218 (DETE…DETE) and 339-358 (EPIE…DEDD). Positions 423-439 (KTIRNSMRSDSVGNSVK) are enriched in polar residues. The segment covering 446–463 (SHAEKPADVRLILEEKRQ) has biased composition (basic and acidic residues). The segment covering 464-475 (STASRQQSSSGK) has biased composition (low complexity). Composition is skewed to basic and acidic residues over residues 501–511 (SRREPLSDVHS) and 544–556 (PKDK…KSEK). Residues 602–611 (ESSSGSDTDS) are compositionally biased toward low complexity.

Belongs to the NCBP3 family. As to quaternary structure, component of an alternative cap-binding complex (CBC) composed of NCBP1/CBP80 and NCBP3.

It localises to the nucleus. The protein resides in the cytoplasm. Functionally, associates with NCBP1/CBP80 to form an alternative cap-binding complex (CBC) which plays a key role in mRNA export. NCBP3 serves as adapter protein linking the capped RNAs (m7GpppG-capped RNA) to NCBP1/CBP80. Unlike the conventional CBC with NCBP2 which binds both small nuclear RNA (snRNA) and messenger (mRNA) and is involved in their export from the nucleus, the alternative CBC with NCBP3 does not bind snRNA and associates only with mRNA thereby playing a role in only mRNA export. The sequence is that of Nuclear cap-binding protein subunit 3 from Xenopus tropicalis (Western clawed frog).